The chain runs to 182 residues: Ribosome maturation factor RimM (182 aa).

Positions 102 to 182 (EEDDYYWKDL…RVEVDWDPGF (81 aa)) constitute a PRC barrel domain.

The protein belongs to the RimM family. Binds ribosomal protein uS19.

The protein localises to the cytoplasm. Functionally, an accessory protein needed during the final step in the assembly of 30S ribosomal subunit, possibly for assembly of the head region. Essential for efficient processing of 16S rRNA. May be needed both before and after RbfA during the maturation of 16S rRNA. It has affinity for free ribosomal 30S subunits but not for 70S ribosomes. This Yersinia pseudotuberculosis serotype IB (strain PB1/+) protein is Ribosome maturation factor RimM.